The chain runs to 360 residues: Endolytic murein transglycosylase (360 aa).

A helical membrane pass occupies residues 16-36; it reads IILSSIVVLFLIIGGAFLYGK.

This sequence belongs to the transglycosylase MltG family.

The protein resides in the cell membrane. It catalyses the reaction a peptidoglycan chain = a peptidoglycan chain with N-acetyl-1,6-anhydromuramyl-[peptide] at the reducing end + a peptidoglycan chain with N-acetylglucosamine at the non-reducing end.. Functionally, functions as a peptidoglycan terminase that cleaves nascent peptidoglycan strands endolytically to terminate their elongation. The chain is Endolytic murein transglycosylase from Bacillus subtilis (strain 168).